Here is an 842-residue protein sequence, read N- to C-terminus: Elongation factor 2 (842 aa).

The tr-type G domain maps to 17 to 346; the sequence is TNVRNMSVIA…MIVMHLPSPV (330 aa). Residues 26 to 33, 158 to 161, and 213 to 215 each bind GTP; these read AHVDHGKS, NKVD, and SGL. Residue His-699 is modified to Diphthamide.

This sequence belongs to the TRAFAC class translation factor GTPase superfamily. Classic translation factor GTPase family. EF-G/EF-2 subfamily.

The protein resides in the cytoplasm. The catalysed reaction is GTP + H2O = GDP + phosphate + H(+). Catalyzes the GTP-dependent ribosomal translocation step during translation elongation. During this step, the ribosome changes from the pre-translocational (PRE) to the post-translocational (POST) state as the newly formed A-site-bound peptidyl-tRNA and P-site-bound deacylated tRNA move to the P and E sites, respectively. Catalyzes the coordinated movement of the two tRNA molecules, the mRNA and conformational changes in the ribosome. The protein is Elongation factor 2 (EFT1) of Candida glabrata (strain ATCC 2001 / BCRC 20586 / JCM 3761 / NBRC 0622 / NRRL Y-65 / CBS 138) (Yeast).